The following is a 432-amino-acid chain: Glutamate-1-semialdehyde 2,1-aminomutase (432 aa).

Lys267 bears the N6-(pyridoxal phosphate)lysine mark.

It belongs to the class-III pyridoxal-phosphate-dependent aminotransferase family. HemL subfamily. As to quaternary structure, homodimer. Requires pyridoxal 5'-phosphate as cofactor.

The protein resides in the cytoplasm. It carries out the reaction (S)-4-amino-5-oxopentanoate = 5-aminolevulinate. It functions in the pathway porphyrin-containing compound metabolism; protoporphyrin-IX biosynthesis; 5-aminolevulinate from L-glutamyl-tRNA(Glu): step 2/2. This chain is Glutamate-1-semialdehyde 2,1-aminomutase, found in Rhodococcus erythropolis (strain PR4 / NBRC 100887).